Here is a 464-residue protein sequence, read N- to C-terminus: UDP-N-acetylmuramate--L-alanine ligase (464 aa).

ATP is bound at residue 123 to 129 (GTHGKTT).

The protein belongs to the MurCDEF family.

Its subcellular location is the cytoplasm. The enzyme catalyses UDP-N-acetyl-alpha-D-muramate + L-alanine + ATP = UDP-N-acetyl-alpha-D-muramoyl-L-alanine + ADP + phosphate + H(+). It functions in the pathway cell wall biogenesis; peptidoglycan biosynthesis. Its function is as follows. Cell wall formation. In Carboxydothermus hydrogenoformans (strain ATCC BAA-161 / DSM 6008 / Z-2901), this protein is UDP-N-acetylmuramate--L-alanine ligase.